The primary structure comprises 603 residues: UvrABC system protein C (603 aa).

The GIY-YIG domain maps to 15 to 92; that stretch reads DQPGCYLMKD…IKKHDPRFNI (78 aa). One can recognise a UVR domain in the interval 197–232; the sequence is KTVKNDLMKKMQEAAENMEFEKAGEFRDQINAIETT.

It belongs to the UvrC family. In terms of assembly, interacts with UvrB in an incision complex.

The protein localises to the cytoplasm. In terms of biological role, the UvrABC repair system catalyzes the recognition and processing of DNA lesions. UvrC both incises the 5' and 3' sides of the lesion. The N-terminal half is responsible for the 3' incision and the C-terminal half is responsible for the 5' incision. The chain is UvrABC system protein C from Listeria monocytogenes serotype 4b (strain CLIP80459).